A 744-amino-acid chain; its full sequence is Cullin-3 (744 aa).

The 60-residue stretch at 677 to 736 folds into the Cullin neddylation domain; the sequence is MELSAIIVRIMKTEGKLSHQQLLERTTKRTQSRLSLTPSILKRSIQLLIEKEYIQRNADD. Lys-688 participates in a covalent cross-link: Glycyl lysine isopeptide (Lys-Gly) (interchain with G-Cter in NEDD8).

Belongs to the cullin family. Component of a ubiquitin-protein ligase complex consisting of the cullin CUL3, the linker protein ELC1, the substrate receptor ELA1, and the RING protein HRT1. Post-translationally, neddylated; enhancing the ubiquitin-ligase activity.

Its pathway is protein modification; protein ubiquitination. As part of the CRL3 E3 ubiquitin ligase complex; polyubiquitylates monoubiquitylated RNA polymerase II subunit RPO21 to trigger its proteolysis; plays a role in global genomic repair. This is Cullin-3 (CUL3) from Saccharomyces cerevisiae (strain ATCC 204508 / S288c) (Baker's yeast).